The sequence spans 396 residues: Ornithine aminotransferase (396 aa).

Position 255 is an N6-(pyridoxal phosphate)lysine (lysine 255).

It belongs to the class-III pyridoxal-phosphate-dependent aminotransferase family. OAT subfamily. The cofactor is pyridoxal 5'-phosphate.

The protein resides in the cytoplasm. The catalysed reaction is a 2-oxocarboxylate + L-ornithine = L-glutamate 5-semialdehyde + an L-alpha-amino acid. It functions in the pathway amino-acid biosynthesis; L-proline biosynthesis; L-glutamate 5-semialdehyde from L-ornithine: step 1/1. In terms of biological role, catalyzes the interconversion of ornithine to glutamate semialdehyde. The protein is Ornithine aminotransferase of Staphylococcus carnosus (strain TM300).